The sequence spans 555 residues: Formate--tetrahydrofolate ligase (555 aa).

Residue Thr-65–Thr-72 participates in ATP binding.

The protein belongs to the formate--tetrahydrofolate ligase family.

It catalyses the reaction (6S)-5,6,7,8-tetrahydrofolate + formate + ATP = (6R)-10-formyltetrahydrofolate + ADP + phosphate. The protein operates within one-carbon metabolism; tetrahydrofolate interconversion. This is Formate--tetrahydrofolate ligase from Thermoanaerobacter sp. (strain X514).